A 129-amino-acid chain; its full sequence is Small ribosomal subunit protein bS6 (129 aa).

Residues 103–129 (LKQKEERAERAPRREERAEAKPEAAAE) are disordered. Basic and acidic residues predominate over residues 104–129 (KQKEERAERAPRREERAEAKPEAAAE).

This sequence belongs to the bacterial ribosomal protein bS6 family.

In terms of biological role, binds together with bS18 to 16S ribosomal RNA. This Vibrio campbellii (strain ATCC BAA-1116) protein is Small ribosomal subunit protein bS6.